The sequence spans 259 residues: uncharacterized protein (259 aa).

To M.thermoautotrophicum MTH738.

This is an uncharacterized protein from Methanocaldococcus jannaschii (strain ATCC 43067 / DSM 2661 / JAL-1 / JCM 10045 / NBRC 100440) (Methanococcus jannaschii).